Reading from the N-terminus, the 648-residue chain is MTEPLIRVRGVSRAFPAGDEMVRVLKDVDLDIEAGEMMAIIGASGSGKSTLMNILGCLDRPTTGSYWIEGRETSKMAVDELAALRRERFGFIFQRYHLLGDLSAASNVEVPAIYAGRSRSDRHKRAISLLTRLGLAERTGNIPSKLSGGQQQRVSIARALMNGGEIILADEPTGALDTHSGAEVMKILRELHAEGHTIILVTHDKKIAEHADRVVEISDGVIISDERNVSRSTTARPIREHGPSAGWRGAIDRMTEALRMAGAAIWAHKMRSLLTMLGIIIGIASVAAISALGAGSQQQILSSISSLGTNTIEVRAGKGFGDLEAGKIRTLVPADAEALVNQPYVDSVTPTVTTSVTVKRAAVAVNASVTGVGADFFRVRGLELAHGQLFDAQDVIAYSQNVVIDASAARDLFPDRVNPVGQVILLGTMPARVVGVTKRENSFGPAVDTLTVYAPYTTVMGRMLGRPNVDGITVRIRDDVDPGNVEAAVTRLIERRHGAKDFFLTNSATIRETIETTTQTLTLLISSVAVISLIVGGIGVMNIMLVSVTERTKEIGVRVAVGARRSDILSQFLIEAVMVCLVGGLMGIMLALGISALFNLLSPDFKMIFSPGSIIVAFACSTLIGIVFGFLPARNAAKLDPIEALARD.

The region spanning 6–251 (IRVRGVSRAF…GPSAGWRGAI (246 aa)) is the ABC transporter domain. An ATP-binding site is contributed by 42–49 (GASGSGKS). Transmembrane regions (helical) follow at residues 273 to 293 (LLTMLGIIIGIASVAAISALG), 528 to 548 (VAVISLIVGGIGVMNIMLVSV), 572 to 592 (FLIEAVMVCLVGGLMGIMLAL), and 613 to 633 (SIIVAFACSTLIGIVFGFLPA).

Belongs to the ABC transporter superfamily. Macrolide exporter (TC 3.A.1.122) family. As to quaternary structure, homodimer.

The protein resides in the cell inner membrane. Its function is as follows. Non-canonical ABC transporter that contains transmembrane domains (TMD), which form a pore in the inner membrane, and an ATP-binding domain (NBD), which is responsible for energy generation. Confers resistance against macrolides. This chain is Macrolide export ATP-binding/permease protein MacB, found in Agrobacterium fabrum (strain C58 / ATCC 33970) (Agrobacterium tumefaciens (strain C58)).